The sequence spans 279 residues: 3-methyl-2-oxobutanoate hydroxymethyltransferase (279 aa).

D44 and D83 together coordinate Mg(2+). 3-methyl-2-oxobutanoate-binding positions include 44–45, D83, and K112; that span reads DS. Residue E114 participates in Mg(2+) binding. Residue E181 is the Proton acceptor of the active site.

Belongs to the PanB family. Homodecamer; pentamer of dimers. Requires Mg(2+) as cofactor.

The protein localises to the cytoplasm. The enzyme catalyses 3-methyl-2-oxobutanoate + (6R)-5,10-methylene-5,6,7,8-tetrahydrofolate + H2O = 2-dehydropantoate + (6S)-5,6,7,8-tetrahydrofolate. The protein operates within cofactor biosynthesis; coenzyme A biosynthesis. Functionally, catalyzes the reversible reaction in which hydroxymethyl group from 5,10-methylenetetrahydrofolate is transferred onto alpha-ketoisovalerate to form ketopantoate. This Nitrosopumilus maritimus (strain SCM1) protein is 3-methyl-2-oxobutanoate hydroxymethyltransferase.